The following is a 157-amino-acid chain: Probable chemoreceptor glutamine deamidase CheD (157 aa).

Belongs to the CheD family.

It carries out the reaction L-glutaminyl-[protein] + H2O = L-glutamyl-[protein] + NH4(+). Probably deamidates glutamine residues to glutamate on methyl-accepting chemotaxis receptors (MCPs), playing an important role in chemotaxis. This chain is Probable chemoreceptor glutamine deamidase CheD, found in Archaeoglobus fulgidus (strain ATCC 49558 / DSM 4304 / JCM 9628 / NBRC 100126 / VC-16).